We begin with the raw amino-acid sequence, 75 residues long: UPF0352 protein VSAL_I1058 (75 aa).

The protein belongs to the UPF0352 family.

This is UPF0352 protein VSAL_I1058 from Aliivibrio salmonicida (strain LFI1238) (Vibrio salmonicida (strain LFI1238)).